The sequence spans 240 residues: uncharacterized protein (240 aa).

The Cytoplasmic portion of the chain corresponds to 1–85 (MSGFIKSTLL…LCGCCCWTNT (85 aa)). Residues 86-106 (IGWAPLLALLPVIGPLLMYWV) traverse the membrane as a helical segment. Residues 107-131 (HDKLIELADDRYKLPAEIKVKMHGN) lie on the Extracellular side of the membrane. Residues 132-152 (IVIDLLISLVPILGSVFAWLH) form a helical membrane-spanning segment. Topologically, residues 153 to 240 (ACSTRNAAIV…TNGRPQRGYR (88 aa)) are cytoplasmic. The interval 181-240 (QKEENEKHSNANTAPPVVGGNKNVNGNRNNSKMYNRPPVTAPPAPAYTRSTNGRPQRGYR) is disordered. Residues 197-210 (VVGGNKNVNGNRNN) are compositionally biased toward low complexity.

It localises to the membrane. This is an uncharacterized protein from Saccharomyces cerevisiae (strain ATCC 204508 / S288c) (Baker's yeast).